The following is a 187-amino-acid chain: Crossover junction endodeoxyribonuclease RuvC (187 aa).

Catalysis depends on residues D7, E67, and D140. Residues D7, E67, and D140 each contribute to the Mg(2+) site.

This sequence belongs to the RuvC family. As to quaternary structure, homodimer which binds Holliday junction (HJ) DNA. The HJ becomes 2-fold symmetrical on binding to RuvC with unstacked arms; it has a different conformation from HJ DNA in complex with RuvA. In the full resolvosome a probable DNA-RuvA(4)-RuvB(12)-RuvC(2) complex forms which resolves the HJ. Mg(2+) serves as cofactor.

It localises to the cytoplasm. It catalyses the reaction Endonucleolytic cleavage at a junction such as a reciprocal single-stranded crossover between two homologous DNA duplexes (Holliday junction).. In terms of biological role, the RuvA-RuvB-RuvC complex processes Holliday junction (HJ) DNA during genetic recombination and DNA repair. Endonuclease that resolves HJ intermediates. Cleaves cruciform DNA by making single-stranded nicks across the HJ at symmetrical positions within the homologous arms, yielding a 5'-phosphate and a 3'-hydroxyl group; requires a central core of homology in the junction. The consensus cleavage sequence is 5'-(A/T)TT(C/G)-3'. Cleavage occurs on the 3'-side of the TT dinucleotide at the point of strand exchange. HJ branch migration catalyzed by RuvA-RuvB allows RuvC to scan DNA until it finds its consensus sequence, where it cleaves and resolves the cruciform DNA. This chain is Crossover junction endodeoxyribonuclease RuvC, found in Chlorobium phaeobacteroides (strain DSM 266 / SMG 266 / 2430).